A 142-amino-acid chain; its full sequence is Non-specific lipid transfer protein GPI-anchored 34 (142 aa).

A signal peptide spans 1–22 (MAVAVTAVLFLAVVIAPQWTET). Residues 21–43 (ETKKPPRPSDTSDTSGTSGRDRR) form a disordered region. Residues 29–38 (SDTSDTSGTS) are compositionally biased toward low complexity. Intrachain disulfides connect Cys46–Cys85, Cys57–Cys69, Cys70–Cys106, and Cys83–Cys114. Residue Asn120 is the site of GPI-anchor amidated asparagine attachment. The propeptide at 121-142 (GGATKKIVASMGLFGVVASLFF) is removed in mature form.

Belongs to the plant LTP family.

Its subcellular location is the cell membrane. Probable lipid transfer protein. This is Non-specific lipid transfer protein GPI-anchored 34 from Arabidopsis thaliana (Mouse-ear cress).